The sequence spans 25 residues: Cysteine protease inhibitor 2 (25 aa).

The protein belongs to the protease inhibitor I3 (leguminous Kunitz-type inhibitor) family. As to expression, cortex of tuber.

Inhibitor of subtilisin. Inhibits moderately trypsin and chymotrypsin (serine proteases). May protect the plant by inhibiting proteases of invading organisms. This Solanum tuberosum (Potato) protein is Cysteine protease inhibitor 2.